The following is a 300-amino-acid chain: 33 kDa chaperonin (300 aa).

Disulfide bonds link C235–C237 and C269–C272.

It belongs to the HSP33 family. Under oxidizing conditions two disulfide bonds are formed involving the reactive cysteines. Under reducing conditions zinc is bound to the reactive cysteines and the protein is inactive.

Its subcellular location is the cytoplasm. Redox regulated molecular chaperone. Protects both thermally unfolding and oxidatively damaged proteins from irreversible aggregation. Plays an important role in the bacterial defense system toward oxidative stress. The protein is 33 kDa chaperonin of Pseudomonas fluorescens (strain Pf0-1).